A 666-amino-acid chain; its full sequence is DNA mismatch repair protein MutL (666 aa).

It belongs to the DNA mismatch repair MutL/HexB family.

This protein is involved in the repair of mismatches in DNA. It is required for dam-dependent methyl-directed DNA mismatch repair. May act as a 'molecular matchmaker', a protein that promotes the formation of a stable complex between two or more DNA-binding proteins in an ATP-dependent manner without itself being part of a final effector complex. This Clostridium botulinum (strain ATCC 19397 / Type A) protein is DNA mismatch repair protein MutL.